The following is a 201-amino-acid chain: Cytochrome c4 (201 aa).

The first 20 residues, 1–20 (MNKLLVSLLLTLGLTGLAHA), serve as a signal peptide directing secretion. Heme c contacts are provided by Cys-34, Cys-37, His-38, Met-77, Cys-130, Cys-133, His-134, and Met-178.

Post-translationally, binds 2 heme c groups covalently per subunit.

It is found in the periplasm. Its function is as follows. Diheme, high potential cytochrome c believed to be an intermediate electron donor to terminal oxidation systems. In Pseudomonas aeruginosa (strain ATCC 15692 / DSM 22644 / CIP 104116 / JCM 14847 / LMG 12228 / 1C / PRS 101 / PAO1), this protein is Cytochrome c4 (cc4).